Consider the following 280-residue polypeptide: Probable endonuclease 4 (280 aa).

Zn(2+) contacts are provided by His-77, His-117, Glu-148, Asp-180, His-183, His-215, Asp-228, His-230, and Glu-259.

Belongs to the AP endonuclease 2 family. It depends on Zn(2+) as a cofactor.

The enzyme catalyses Endonucleolytic cleavage to 5'-phosphooligonucleotide end-products.. Functionally, endonuclease IV plays a role in DNA repair. It cleaves phosphodiester bonds at apurinic or apyrimidinic (AP) sites, generating a 3'-hydroxyl group and a 5'-terminal sugar phosphate. The chain is Probable endonuclease 4 from Thermoplasma volcanium (strain ATCC 51530 / DSM 4299 / JCM 9571 / NBRC 15438 / GSS1).